We begin with the raw amino-acid sequence, 125 residues long: MARIASVNIPDNKRLVVSLTYVYGLGPAMAAEICNKAKISKDKKAKELTDQELISLRNIIESEYKVEGDLRREVTLNIKKKKDIRCYQGLRHIRKLPVRGQNTHSNARTRKGKAIAIAGKKKAVK.

This sequence belongs to the universal ribosomal protein uS13 family. Part of the 30S ribosomal subunit. Forms a loose heterodimer with protein S19. Forms two bridges to the 50S subunit in the 70S ribosome.

Its function is as follows. Located at the top of the head of the 30S subunit, it contacts several helices of the 16S rRNA. In the 70S ribosome it contacts the 23S rRNA (bridge B1a) and protein L5 of the 50S subunit (bridge B1b), connecting the 2 subunits; these bridges are implicated in subunit movement. Contacts the tRNAs in the A and P-sites. This is Small ribosomal subunit protein uS13 from Rickettsia akari (strain Hartford).